Here is a 339-residue protein sequence, read N- to C-terminus: Phenylalanine--tRNA ligase alpha subunit (339 aa).

A Mg(2+)-binding site is contributed by E250.

Belongs to the class-II aminoacyl-tRNA synthetase family. Phe-tRNA synthetase alpha subunit type 1 subfamily. As to quaternary structure, tetramer of two alpha and two beta subunits. Requires Mg(2+) as cofactor.

It is found in the cytoplasm. It carries out the reaction tRNA(Phe) + L-phenylalanine + ATP = L-phenylalanyl-tRNA(Phe) + AMP + diphosphate + H(+). The sequence is that of Phenylalanine--tRNA ligase alpha subunit from Christiangramia forsetii (strain DSM 17595 / CGMCC 1.15422 / KT0803) (Gramella forsetii).